We begin with the raw amino-acid sequence, 369 residues long: UDP-N-acetylglucosamine--N-acetylmuramyl-(pentapeptide) pyrophosphoryl-undecaprenol N-acetylglucosamine transferase (369 aa).

Residues 10–12, Asn-124, Ser-195, Ile-252, and Gln-297 each bind UDP-N-acetyl-alpha-D-glucosamine; that span reads TGG.

Belongs to the glycosyltransferase 28 family. MurG subfamily.

Its subcellular location is the cell membrane. The catalysed reaction is Mur2Ac(oyl-L-Ala-gamma-D-Glu-L-Lys-D-Ala-D-Ala)-di-trans,octa-cis-undecaprenyl diphosphate + UDP-N-acetyl-alpha-D-glucosamine = beta-D-GlcNAc-(1-&gt;4)-Mur2Ac(oyl-L-Ala-gamma-D-Glu-L-Lys-D-Ala-D-Ala)-di-trans,octa-cis-undecaprenyl diphosphate + UDP + H(+). The protein operates within cell wall biogenesis; peptidoglycan biosynthesis. Cell wall formation. Catalyzes the transfer of a GlcNAc subunit on undecaprenyl-pyrophosphoryl-MurNAc-pentapeptide (lipid intermediate I) to form undecaprenyl-pyrophosphoryl-MurNAc-(pentapeptide)GlcNAc (lipid intermediate II). In Leuconostoc citreum (strain KM20), this protein is UDP-N-acetylglucosamine--N-acetylmuramyl-(pentapeptide) pyrophosphoryl-undecaprenol N-acetylglucosamine transferase.